Consider the following 457-residue polypeptide: Argininosuccinate lyase (457 aa).

Belongs to the lyase 1 family. Argininosuccinate lyase subfamily.

The protein resides in the cytoplasm. The enzyme catalyses 2-(N(omega)-L-arginino)succinate = fumarate + L-arginine. It functions in the pathway amino-acid biosynthesis; L-arginine biosynthesis; L-arginine from L-ornithine and carbamoyl phosphate: step 3/3. The sequence is that of Argininosuccinate lyase from Escherichia coli O157:H7.